The sequence spans 234 residues: Urease accessory protein UreF (234 aa).

The protein belongs to the UreF family. UreD, UreF and UreG form a complex that acts as a GTP-hydrolysis-dependent molecular chaperone, activating the urease apoprotein by helping to assemble the nickel containing metallocenter of UreC. The UreE protein probably delivers the nickel.

It localises to the cytoplasm. Its function is as follows. Required for maturation of urease via the functional incorporation of the urease nickel metallocenter. The chain is Urease accessory protein UreF from Kocuria rhizophila (strain ATCC 9341 / DSM 348 / NBRC 103217 / DC2201).